Consider the following 437-residue polypeptide: U1 small nuclear ribonucleoprotein 70 kDa (437 aa).

Thr2 bears the N-acetylthreonine mark. A disordered region spans residues 48-79; it reads FEDPRDAPPPTRAETREERMERKRREKIERRQ. Basic and acidic residues predominate over residues 60-79; that stretch reads AETREERMERKRREKIERRQ. Positions 92 to 202 are required for interaction with U1 RNA; that stretch reads HNDPNAQGDA…GGGLGGTRRG (111 aa). Residues 103 to 181 enclose the RRM domain; the sequence is KTLFVARVNY…RRVLVDVERG (79 aa). Lys118 is modified (N6-acetyllysine). A Phosphotyrosine modification is found at Tyr126. The tract at residues 187–437 is disordered; the sequence is WRPRRLGGGL…NGYLMEAAPE (251 aa). Residues 192-201 show a composition bias toward gly residues; the sequence is LGGGLGGTRR. The span at 207-254 shows a compositional bias: basic and acidic residues; that stretch reads NIRHSGRDDTSRYDERPGPSPLPHRDRDRDRERERRERSRERDKERER. Phosphoserine is present on residues Ser226 and Ser268. Over residues 255-268 the composition is skewed to basic residues; it reads RRSRSRDRRRRSRS. Basic and acidic residues-rich tracts occupy residues 269–286 and 294–310; these read RDKE…DKDR and RSRE…EELR. The residue at position 320 (Ser320) is a Phosphoserine. Over residues 343 to 393 the composition is skewed to basic and acidic residues; the sequence is PEEKGRDRDRERRRSHRSERERRRDRDRDRDRDREHKRGERGSERGRDEAR. Lys346 is covalently cross-linked (Glycyl lysine isopeptide (Lys-Gly) (interchain with G-Cter in SUMO2)). Ser410 is modified (phosphoserine).

In terms of assembly, component of the U1 snRNP. The U1 snRNP is composed of the U1 snRNA and the 7 core Sm proteins SNRPB, SNRPD1, SNRPD2, SNRPD3, SNRPE, SNRPF and SNRPG that assemble in a heptameric protein ring on the Sm site of the small nuclear RNA to form the core snRNP, and at least three U1 snRNP-specific proteins SNRNP70/U1-70K, SNRPA/U1-A and SNRPC/U1-C. Interacts with SCNM1. Found in a pre-mRNA splicing complex with SFRS4, SFRS5, SNRNP70, SNRPA1, SRRM1 and SRRM2. Found in a pre-mRNA exonic splicing enhancer (ESE) complex with SNRNP70, SNRPA1, SRRM1 and TRA2B/SFRS10. Interacts with dephosphorylated SFRS13A and SFPQ. Interacts with NUDT21/CPSF5, CPSF6, SCAF11, and ZRANB2. Interacts with GEMIN5. Interacts with FUS. In terms of processing, the N-terminus is blocked. Extensively phosphorylated on serine residues in the C-terminal region.

It is found in the nucleus speckle. Its subcellular location is the nucleus. The protein resides in the nucleoplasm. Functionally, component of the spliceosomal U1 snRNP, which is essential for recognition of the pre-mRNA 5' splice-site and the subsequent assembly of the spliceosome. SNRNP70 binds to the loop I region of U1-snRNA. Its function is as follows. Truncated isoforms that lack the RRM domain cannot bind U1-snRNA. The chain is U1 small nuclear ribonucleoprotein 70 kDa (SNRNP70) from Homo sapiens (Human).